Consider the following 332-residue polypeptide: Super small secreted glycoprotein (332 aa).

The first 33 residues, 1–33 (MGSGYQLLQLPRERFRKTSFLVWVIILFQRAIS), serve as a signal peptide directing secretion. N-linked (GlcNAc...) asparagine; by host glycosylation occurs at asparagine 41. Intrachain disulfides connect cysteine 109-cysteine 136 and cysteine 122-cysteine 148. Asparagine 205, asparagine 239, asparagine 258, and asparagine 269 each carry an N-linked (GlcNAc...) asparagine; by host glycan.

It belongs to the filoviruses glycoprotein family.

Its subcellular location is the secreted. This Homo sapiens (Human) protein is Super small secreted glycoprotein (GP).